A 432-amino-acid polypeptide reads, in one-letter code: 3-phosphoshikimate 1-carboxyvinyltransferase (432 aa).

3-phosphoshikimate contacts are provided by K22, S23, and R27. K22 provides a ligand contact to phosphoenolpyruvate. Phosphoenolpyruvate is bound by residues G96 and R127. The 3-phosphoshikimate site is built by S173, S174, Q175, S201, D316, N339, and K343. Residue Q175 coordinates phosphoenolpyruvate. The active-site Proton acceptor is D316. Phosphoenolpyruvate is bound by residues R347, R391, and K416.

This sequence belongs to the EPSP synthase family. Monomer.

Its subcellular location is the cytoplasm. It catalyses the reaction 3-phosphoshikimate + phosphoenolpyruvate = 5-O-(1-carboxyvinyl)-3-phosphoshikimate + phosphate. It participates in metabolic intermediate biosynthesis; chorismate biosynthesis; chorismate from D-erythrose 4-phosphate and phosphoenolpyruvate: step 6/7. Functionally, catalyzes the transfer of the enolpyruvyl moiety of phosphoenolpyruvate (PEP) to the 5-hydroxyl of shikimate-3-phosphate (S3P) to produce enolpyruvyl shikimate-3-phosphate and inorganic phosphate. The protein is 3-phosphoshikimate 1-carboxyvinyltransferase of Histophilus somni (Haemophilus somnus).